A 335-amino-acid chain; its full sequence is Mycobacterial beta-ketoacyl-[acyl-carrier-protein] synthase III (335 aa).

Catalysis depends on residues Cys122 and His258. Residues 259–263 form an ACP-binding region; sequence QANSR. The active site involves Asn289.

The protein belongs to the thiolase-like superfamily. FabH family. Homodimer.

The protein resides in the cytoplasm. The catalysed reaction is malonyl-[ACP] + dodecanoyl-CoA + H(+) = 3-oxotetradecanoyl-[ACP] + CO2 + CoA. It functions in the pathway lipid metabolism; fatty acid biosynthesis. The protein operates within lipid metabolism; mycolic acid biosynthesis. Its function is as follows. Catalyzes the condensation reaction of fatty acid synthesis by the addition to an acyl acceptor of two carbons from malonyl-ACP. Catalyzes the first condensation reaction which initiates fatty acid synthesis and may therefore play a role in governing the total rate of fatty acid production. Possesses both acetoacetyl-ACP synthase and acetyl transacylase activities. Its substrate specificity determines the biosynthesis of branched-chain and/or straight-chain of fatty acids. In Mycolicibacterium paratuberculosis (strain ATCC BAA-968 / K-10) (Mycobacterium paratuberculosis), this protein is Mycobacterial beta-ketoacyl-[acyl-carrier-protein] synthase III.